Consider the following 436-residue polypeptide: ATP-dependent protease ATPase subunit HslU (436 aa).

ATP is bound by residues Ile-19, 61-66, Asp-249, Glu-314, and Arg-386; that span reads GVGKTE.

The protein belongs to the ClpX chaperone family. HslU subfamily. As to quaternary structure, a double ring-shaped homohexamer of HslV is capped on each side by a ring-shaped HslU homohexamer. The assembly of the HslU/HslV complex is dependent on binding of ATP.

It is found in the cytoplasm. In terms of biological role, ATPase subunit of a proteasome-like degradation complex; this subunit has chaperone activity. The binding of ATP and its subsequent hydrolysis by HslU are essential for unfolding of protein substrates subsequently hydrolyzed by HslV. HslU recognizes the N-terminal part of its protein substrates and unfolds these before they are guided to HslV for hydrolysis. The polypeptide is ATP-dependent protease ATPase subunit HslU (Bartonella bacilliformis (strain ATCC 35685 / KC583 / Herrer 020/F12,63)).